We begin with the raw amino-acid sequence, 140 residues long: Nucleoside diphosphate kinase (140 aa).

Residues K10, F58, R86, T92, R103, and N113 each coordinate ATP. Catalysis depends on H116, which acts as the Pros-phosphohistidine intermediate.

The protein belongs to the NDK family. Homotetramer. The cofactor is Mg(2+).

The protein localises to the cytoplasm. It catalyses the reaction a 2'-deoxyribonucleoside 5'-diphosphate + ATP = a 2'-deoxyribonucleoside 5'-triphosphate + ADP. The enzyme catalyses a ribonucleoside 5'-diphosphate + ATP = a ribonucleoside 5'-triphosphate + ADP. Functionally, major role in the synthesis of nucleoside triphosphates other than ATP. The ATP gamma phosphate is transferred to the NDP beta phosphate via a ping-pong mechanism, using a phosphorylated active-site intermediate. In Haemophilus influenzae (strain PittEE), this protein is Nucleoside diphosphate kinase.